The chain runs to 479 residues: Anaerobic nitric oxide reductase flavorubredoxin (479 aa).

Positions 30-210 (LRGSSYNSYL…PFSRLVTPKI (181 aa)) are zinc metallo-hydrolase. Fe cation contacts are provided by H79, E81, D83, H147, D166, and H227. In terms of domain architecture, Flavodoxin-like spans 254–393 (ITIFYDTMSN…LCREHGREIA (140 aa)). FMN-binding positions include 260–264 (TMSNN) and 342–369 (AFGSHGWSGGAVDRLSTRLQDAGFEMSL). Residues 423–474 (GPRMQCSVCQWIYDPAKGEPMQDVAPGTPWSEVPDNFLCPECSLGKDVFDEL) enclose the Rubredoxin-like domain. Positions 428, 431, 461, and 464 each coordinate Fe cation.

The protein in the N-terminal section; belongs to the zinc metallo-hydrolase group 3 family. Homotetramer. Fe cation is required as a cofactor. Requires FMN as cofactor.

The protein localises to the cytoplasm. It participates in nitrogen metabolism; nitric oxide reduction. Functionally, anaerobic nitric oxide reductase; uses NADH to detoxify nitric oxide (NO), protecting several 4Fe-4S NO-sensitive enzymes. Has at least 2 reductase partners, only one of which (NorW, flavorubredoxin reductase) has been identified. NO probably binds to the di-iron center; electrons enter from the NorW at rubredoxin and are transferred sequentially to the FMN center and the di-iron center. Also able to function as an aerobic oxygen reductase. In Shigella sonnei (strain Ss046), this protein is Anaerobic nitric oxide reductase flavorubredoxin.